A 92-amino-acid chain; its full sequence is Small ribosomal subunit protein uS19c (92 aa).

The protein belongs to the universal ribosomal protein uS19 family.

The protein localises to the plastid. It localises to the chloroplast. Its function is as follows. Protein S19 forms a complex with S13 that binds strongly to the 16S ribosomal RNA. This Ceratophyllum demersum (Rigid hornwort) protein is Small ribosomal subunit protein uS19c.